Here is a 146-residue protein sequence, read N- to C-terminus: Anti-sigma F factor (146 aa).

It belongs to the anti-sigma-factor family.

It carries out the reaction L-seryl-[protein] + ATP = O-phospho-L-seryl-[protein] + ADP + H(+). It catalyses the reaction L-threonyl-[protein] + ATP = O-phospho-L-threonyl-[protein] + ADP + H(+). Functionally, binds to sigma F and blocks its ability to form an RNA polymerase holoenzyme (E-sigma F). Phosphorylates SpoIIAA on a serine residue. This phosphorylation may enable SpoIIAA to act as an anti-anti-sigma factor that counteracts SpoIIAB and thus releases sigma F from inhibition. The sequence is that of Anti-sigma F factor from Halalkalibacterium halodurans (strain ATCC BAA-125 / DSM 18197 / FERM 7344 / JCM 9153 / C-125) (Bacillus halodurans).